Here is a 214-residue protein sequence, read N- to C-terminus: Single-pass membrane and coiled-coil domain-containing protein 1 (214 aa).

Residues 6 to 42 (TTLISLKEAMKRVDHKLQALETQFKELDFTKDNLMQK) adopt a coiled-coil conformation. Residues 65 to 81 (ALQLTSMELNILYSYVI) form a helical membrane-spanning segment.

The protein localises to the membrane. The polypeptide is Single-pass membrane and coiled-coil domain-containing protein 1 (SMCO1) (Homo sapiens (Human)).